Here is a 541-residue protein sequence, read N- to C-terminus: Chaperonin GroEL (541 aa).

Residues 29 to 32 (TLGP), 86 to 90 (DGTTT), glycine 413, 478 to 480 (NAL), and aspartate 494 contribute to the ATP site.

The protein belongs to the chaperonin (HSP60) family. Forms a cylinder of 14 subunits composed of two heptameric rings stacked back-to-back. Interacts with the co-chaperonin GroES.

Its subcellular location is the cytoplasm. It carries out the reaction ATP + H2O + a folded polypeptide = ADP + phosphate + an unfolded polypeptide.. In terms of biological role, together with its co-chaperonin GroES, plays an essential role in assisting protein folding. The GroEL-GroES system forms a nano-cage that allows encapsulation of the non-native substrate proteins and provides a physical environment optimized to promote and accelerate protein folding. This is Chaperonin GroEL from Lachnoclostridium phytofermentans (strain ATCC 700394 / DSM 18823 / ISDg) (Clostridium phytofermentans).